Consider the following 158-residue polypeptide: N-acetylgalactosamine-specific phosphotransferase enzyme IIB component 1 (158 aa).

The PTS EIIB type-4 domain occupies 1–158 (MTSPNILLTR…PGDQKEQIPD (158 aa)). His17 (pros-phosphohistidine intermediate) is an active-site residue.

It is found in the cytoplasm. In terms of biological role, the phosphoenolpyruvate-dependent sugar phosphotransferase system (sugar PTS), a major carbohydrate active -transport system, catalyzes the phosphorylation of incoming sugar substrates concomitantly with their translocation across the cell membrane. This system is involved in N-acetylgalactosamine transport. This chain is N-acetylgalactosamine-specific phosphotransferase enzyme IIB component 1 (agaB), found in Escherichia coli (strain K12).